A 295-amino-acid chain; its full sequence is MLEKIQILLQYLLPKYWITYLVGLGASWKGGWITRYAILLFIHIYKIDMKESDKPNLTDYATFNAFFTRKLHKNARPIDTNPSTLIIPADGIITQIGKINQTNIFRVKNAPYHLDGLLAGHDNIIDYFINGSFVIIYIPPQNCHRIYMPCTGTLREVLYIPGNLFSVHPKITKNMPNIFSRNERVICLFETDFGYMAQILIGAIIVGSIETTWLGTITPPREGIVRHWRYSSNNTNTDADDSIILQKGHEMGLFKLGSTVINLFGDKKVILNNLLQPYDIARIGMPLAHGHSQKK.

Catalysis depends on charge relay system; for autoendoproteolytic cleavage activity residues D90 and S258. Catalysis depends on S258, which acts as the Schiff-base intermediate with substrate; via pyruvic acid; for decarboxylase activity. S258 is subject to Pyruvic acid (Ser); by autocatalysis.

It belongs to the phosphatidylserine decarboxylase family. PSD-B subfamily. Prokaryotic type I sub-subfamily. As to quaternary structure, heterodimer of a large membrane-associated beta subunit and a small pyruvoyl-containing alpha subunit. The cofactor is pyruvate. Post-translationally, is synthesized initially as an inactive proenzyme. Formation of the active enzyme involves a self-maturation process in which the active site pyruvoyl group is generated from an internal serine residue via an autocatalytic post-translational modification. Two non-identical subunits are generated from the proenzyme in this reaction, and the pyruvate is formed at the N-terminus of the alpha chain, which is derived from the carboxyl end of the proenzyme. The autoendoproteolytic cleavage occurs by a canonical serine protease mechanism, in which the side chain hydroxyl group of the serine supplies its oxygen atom to form the C-terminus of the beta chain, while the remainder of the serine residue undergoes an oxidative deamination to produce ammonia and the pyruvoyl prosthetic group on the alpha chain. During this reaction, the Ser that is part of the protease active site of the proenzyme becomes the pyruvoyl prosthetic group, which constitutes an essential element of the active site of the mature decarboxylase.

It localises to the cell membrane. The catalysed reaction is a 1,2-diacyl-sn-glycero-3-phospho-L-serine + H(+) = a 1,2-diacyl-sn-glycero-3-phosphoethanolamine + CO2. Its pathway is phospholipid metabolism; phosphatidylethanolamine biosynthesis; phosphatidylethanolamine from CDP-diacylglycerol: step 2/2. Catalyzes the formation of phosphatidylethanolamine (PtdEtn) from phosphatidylserine (PtdSer). This is Phosphatidylserine decarboxylase proenzyme from Blochmanniella pennsylvanica (strain BPEN).